The sequence spans 546 residues: Glutamyl-tRNA(Gln) amidotransferase subunit A, chloroplastic/mitochondrial (546 aa).

A disordered region spans residues 21–52 (KRRRFHSSTPLFLSQPQTLASTDPPSSPPQSQ). Positions 27–43 (SSTPLFLSQPQTLASTD) are enriched in polar residues. Residues Lys-123 and Ser-198 each act as charge relay system in the active site. Catalysis depends on Ser-222, which acts as the Acyl-ester intermediate.

It belongs to the amidase family. GatA subfamily. In terms of assembly, subunit of the heterotrimeric GatCAB amidotransferase (AdT) complex, composed of A, B and C subunits.

The protein localises to the mitochondrion. It localises to the plastid. The protein resides in the chloroplast stroma. The enzyme catalyses L-glutamyl-tRNA(Gln) + L-glutamine + ATP + H2O = L-glutaminyl-tRNA(Gln) + L-glutamate + ADP + phosphate + H(+). Functionally, allows the formation of correctly charged Gln-tRNA(Gln) through the transamidation of misacylated Glu-tRNA(Gln) in chloroplasts and mitochondria. The reaction takes place in the presence of glutamine and ATP through an activated gamma-phospho-Glu-tRNA(Gln). The protein is Glutamyl-tRNA(Gln) amidotransferase subunit A, chloroplastic/mitochondrial of Vitis vinifera (Grape).